The sequence spans 364 residues: Aminomethyltransferase (364 aa).

It belongs to the GcvT family. In terms of assembly, the glycine cleavage system is composed of four proteins: P, T, L and H.

It catalyses the reaction N(6)-[(R)-S(8)-aminomethyldihydrolipoyl]-L-lysyl-[protein] + (6S)-5,6,7,8-tetrahydrofolate = N(6)-[(R)-dihydrolipoyl]-L-lysyl-[protein] + (6R)-5,10-methylene-5,6,7,8-tetrahydrofolate + NH4(+). Functionally, the glycine cleavage system catalyzes the degradation of glycine. The sequence is that of Aminomethyltransferase from Salmonella dublin (strain CT_02021853).